The sequence spans 387 residues: Exodeoxyribonuclease 7 large subunit (387 aa).

Belongs to the XseA family. In terms of assembly, heterooligomer composed of large and small subunits.

It is found in the cytoplasm. The catalysed reaction is Exonucleolytic cleavage in either 5'- to 3'- or 3'- to 5'-direction to yield nucleoside 5'-phosphates.. Bidirectionally degrades single-stranded DNA into large acid-insoluble oligonucleotides, which are then degraded further into small acid-soluble oligonucleotides. The chain is Exodeoxyribonuclease 7 large subunit from Campylobacter jejuni subsp. jejuni serotype O:6 (strain 81116 / NCTC 11828).